The following is a 505-amino-acid chain: Nicotinamide phosphoribosyltransferase (505 aa).

A diphosphate-binding site is contributed by arginine 196. Aspartate 219 lines the beta-nicotinamide D-ribonucleotide pocket. Histidine 246 and arginine 314 together coordinate diphosphate. Beta-nicotinamide D-ribonucleotide contacts are provided by residues 314 to 316, 369 to 370, and arginine 408; these read RPD and GD.

This sequence belongs to the NAPRTase family.

The enzyme catalyses beta-nicotinamide D-ribonucleotide + diphosphate = 5-phospho-alpha-D-ribose 1-diphosphate + nicotinamide + H(+). Its pathway is cofactor biosynthesis; NAD(+) biosynthesis; nicotinamide D-ribonucleotide from 5-phospho-alpha-D-ribose 1-diphosphate and nicotinamide: step 1/1. Its activity is regulated as follows. 10-fold more active in the presence of saturating ATP. Functionally, catalyzes the condensation of nicotinamide with 5-phosphoribosyl-1-pyrophosphate to yield nicotinamide mononucleotide, an intermediate in the biosynthesis of NAD. Functions in the nondeamidating salvage pathway for production of NAD from nicotinamide. Displays a strict preference for nicotinamide over nicotinate substrate. This is Nicotinamide phosphoribosyltransferase from Acinetobacter baylyi (strain ATCC 33305 / BD413 / ADP1).